The chain runs to 883 residues: Copper-transporting ATPase PAA2, chloroplastic (883 aa).

The transit peptide at 1 to 65 (MASNLLRFPL…TQSFESTESS (65 aa)) directs the protein to the chloroplast. In terms of domain architecture, HMA spans 76 to 146 (TPILLDVSGM…RLTESGFEAK (71 aa)). Residues C87 and C90 each coordinate Cu cation. The next 6 helical transmembrane spans lie at 179-199 (VAFAWTLVALCCGSHTSHILH), 209-229 (GIWDLLHNSYVKGGLAVGALL), 250-270 (MNSLVGLGSMAAFSISLISLV), 274-294 (LEWDASFFDEPVMLLGFVLLG), 445-465 (AIAGPFVYTIMSLSAMTFAFW), and 499-519 (VLVVSCPCALGLATPTAILIG). Catalysis depends on D548, which acts as the 4-aspartylphosphate intermediate. 761-768 (GDGINDAP) serves as a coordination point for ATP. Mg(2+)-binding residues include D762 and D766. The next 2 membrane-spanning stretches (helical) occupy residues 822-842 (LAWAIAYNVISIPIAAGVLLP) and 846-866 (FAMTPSLSGGLMALSSIFVVS).

Belongs to the cation transport ATPase (P-type) (TC 3.A.3) family. Type IB subfamily. Expressed in the shoots only and not in the roots.

It localises to the plastid. Its subcellular location is the chloroplast thylakoid membrane. The enzyme catalyses Cu(2+)(in) + ATP + H2O = Cu(2+)(out) + ADP + phosphate + H(+). In terms of biological role, mediates copper transfer across the chloroplast thylakoid membrane. Required for copper delivery into the thylakoids lumen, which is essential for the function of copper proteins. In Arabidopsis thaliana (Mouse-ear cress), this protein is Copper-transporting ATPase PAA2, chloroplastic (PAA2).